Reading from the N-terminus, the 477-residue chain is Bifunctional protein HldE (477 aa).

Positions 1 to 318 (MKVTLPEFER…ENAVRGRADT (318 aa)) are ribokinase. Position 179 is an N6-acetyllysine (Lys179). ATP is bound at residue 195-198 (NLSE). Residue Asp264 is part of the active site. A cytidylyltransferase region spans residues 344–477 (MTNGVFDILH…IKKIQQDKKG (134 aa)).

In the N-terminal section; belongs to the carbohydrate kinase PfkB family. The protein in the C-terminal section; belongs to the cytidylyltransferase family. In terms of assembly, homodimer.

It carries out the reaction D-glycero-beta-D-manno-heptose 7-phosphate + ATP = D-glycero-beta-D-manno-heptose 1,7-bisphosphate + ADP + H(+). The enzyme catalyses D-glycero-beta-D-manno-heptose 1-phosphate + ATP + H(+) = ADP-D-glycero-beta-D-manno-heptose + diphosphate. Its pathway is nucleotide-sugar biosynthesis; ADP-L-glycero-beta-D-manno-heptose biosynthesis; ADP-L-glycero-beta-D-manno-heptose from D-glycero-beta-D-manno-heptose 7-phosphate: step 1/4. It participates in nucleotide-sugar biosynthesis; ADP-L-glycero-beta-D-manno-heptose biosynthesis; ADP-L-glycero-beta-D-manno-heptose from D-glycero-beta-D-manno-heptose 7-phosphate: step 3/4. It functions in the pathway bacterial outer membrane biogenesis; LPS core biosynthesis. Catalyzes the phosphorylation of D-glycero-D-manno-heptose 7-phosphate at the C-1 position to selectively form D-glycero-beta-D-manno-heptose-1,7-bisphosphate. In terms of biological role, catalyzes the ADP transfer from ATP to D-glycero-beta-D-manno-heptose 1-phosphate, yielding ADP-D-glycero-beta-D-manno-heptose. The sequence is that of Bifunctional protein HldE from Escherichia coli O157:H7.